The sequence spans 307 residues: MNQVWVTGDAVVDLIPESETSLLKCPGGAPANVAVAIARLSGKSAFFGRVGDDPFGRFMQSILDQEGVCTEFLIKDPEQRTSTVVVDLDDQGERSFTFMVKPSADQFMSVEDMGNFKQGDWLHVCSISLANEPSRSSTFEAIKRAKAAGGFISFDPNLRDEVWQDQSEIQAVVMKAVAMADVVKFSEEELLFLTDSTSMAQGLQQIAAMNIALVLVTQGAKGVWRVFESQSELITGQVVSPIDTTGAGDAFVGGLLACLSRHADWKNHPVVSSAIQWANGCGALATTQKGAMTALPTQTELLRFIGQ.

Belongs to the carbohydrate kinase PfkB family.

The catalysed reaction is D-fructose + ATP = D-fructose 6-phosphate + ADP + H(+). This is Fructokinase (scrK) from Vibrio alginolyticus.